The chain runs to 503 residues: Probable DNA ligase (503 aa).

Residue glutamate 210 participates in ATP binding. Lysine 212 acts as the N6-AMP-lysine intermediate in catalysis. The ATP site is built by arginine 217, arginine 232, glutamate 261, phenylalanine 296, arginine 367, and lysine 373.

This sequence belongs to the ATP-dependent DNA ligase family. It depends on Mg(2+) as a cofactor.

The enzyme catalyses ATP + (deoxyribonucleotide)n-3'-hydroxyl + 5'-phospho-(deoxyribonucleotide)m = (deoxyribonucleotide)n+m + AMP + diphosphate.. In terms of biological role, DNA ligase that seals nicks in double-stranded DNA during DNA replication, DNA recombination and DNA repair. This chain is Probable DNA ligase, found in Rhodococcus jostii (strain RHA1).